Here is a 374-residue protein sequence, read N- to C-terminus: Retron Eco8 reverse transcriptase (374 aa).

The region spanning 25–252 (ENIITQSAIP…KEISINGYVI (228 aa)) is the Reverse transcriptase domain. 3 residues coordinate Mg(2+): D107, D200, and D201.

It belongs to the bacterial reverse transcriptase family.

It carries out the reaction DNA(n) + a 2'-deoxyribonucleoside 5'-triphosphate = DNA(n+1) + diphosphate. Its function is as follows. Reverse transcriptase (RT) component of antiviral defense system retron Eco8, composed of this RT, the following endonuclease and a non-coding RNA (ncRNA) encoded between them. Expression of retron Eco8 confers protection against bacteriophages T4, T6, T7 and SECphi4, SECphi6 and SECphi18. At multiplicity of infection (MOI) of 0.02 cultures slow growth when infected with SECphi4 but do not collapse, at MOI 2 cultures collapse. Responsible for synthesis of msDNA (a branched molecule with RNA linked by a 2',5'-phosphodiester bond to ssDNA). The retron transcript serves as primer (from a conserved internal G residue) and template for the reaction, and codes for the RT. This chain is Retron Eco8 reverse transcriptase, found in Escherichia coli.